The primary structure comprises 1411 residues: DNA-directed RNA polymerase subunit beta' (1411 aa).

Zn(2+) is bound by residues Cys69, Cys71, Cys84, and Cys87. Mg(2+)-binding residues include Asp461, Asp463, and Asp465. Zn(2+) contacts are provided by Cys809, Cys883, Cys890, and Cys893.

The protein belongs to the RNA polymerase beta' chain family. In terms of assembly, the RNAP catalytic core consists of 2 alpha, 1 beta, 1 beta' and 1 omega subunit. When a sigma factor is associated with the core the holoenzyme is formed, which can initiate transcription. The cofactor is Mg(2+). It depends on Zn(2+) as a cofactor.

The catalysed reaction is RNA(n) + a ribonucleoside 5'-triphosphate = RNA(n+1) + diphosphate. In terms of biological role, DNA-dependent RNA polymerase catalyzes the transcription of DNA into RNA using the four ribonucleoside triphosphates as substrates. This chain is DNA-directed RNA polymerase subunit beta', found in Ehrlichia ruminantium (strain Welgevonden).